Reading from the N-terminus, the 146-residue chain is VHLSADEKNALATLWGKVNPDELGGEALGRLLVVYPWTQRFFDSFGDLSSATAVMGNPKVKAHGKKVLDSFSDGLKHLDNLKGTFSSLSELHCDKLHVDPENFRLLGNELVLVLALHLGKDFTPQVQAAFQKVVAGVANALAHKYH.

An N-acetylvaline modification is found at Val1. Residues 2 to 146 form the Globin domain; the sequence is HLSADEKNAL…VANALAHKYH (145 aa). Ser44 is subject to Phosphoserine. Lys59 carries the N6-acetyllysine modification. His63 contacts heme b. Residue Lys82 is modified to N6-acetyllysine. Heme b is bound at residue His92. Position 93 is an S-nitrosocysteine (Cys93). The residue at position 144 (Lys144) is an N6-acetyllysine.

The protein belongs to the globin family. In terms of assembly, heterotetramer of two alpha chains and two beta chains. Red blood cells.

Involved in oxygen transport from the lung to the various peripheral tissues. The sequence is that of Hemoglobin subunit beta from Sciurus carolinensis (Eastern gray squirrel).